A 565-amino-acid polypeptide reads, in one-letter code: Urease subunit beta (565 aa).

One can recognise a Urease domain in the interval 130-565 (GGIDTHIHFI…LALARKYFMI (436 aa)). Ni(2+) is bound by residues H135, H137, and K218. K218 carries the post-translational modification N6-carboxylysine. A substrate-binding site is contributed by H220. Ni(2+) contacts are provided by H247 and H273. H321 acts as the Proton donor in catalysis. Ni(2+) is bound at residue D361.

Belongs to the metallo-dependent hydrolases superfamily. Urease alpha subunit family. As to quaternary structure, heterohexamer of 3 UreA (alpha) and 3 UreB (beta) subunits. Requires Ni cation as cofactor. In terms of processing, carboxylation allows a single lysine to coordinate two nickel ions.

It is found in the cytoplasm. The catalysed reaction is urea + 2 H2O + H(+) = hydrogencarbonate + 2 NH4(+). The protein operates within nitrogen metabolism; urea degradation; CO(2) and NH(3) from urea (urease route): step 1/1. This Campylobacter lari protein is Urease subunit beta.